A 3546-amino-acid chain; its full sequence is Ubiquitin carboxyl-terminal hydrolase 34 (3546 aa).

4 positions are modified to phosphoserine: Ser-352, Ser-486, Ser-487, and Ser-490. Disordered stretches follow at residues Lys-502–Ser-535, Val-550–Thr-679, and Thr-1459–Glu-1478. Positions Ala-511–Ser-524 are enriched in low complexity. 2 stretches are compositionally biased toward polar residues: residues Asp-525–Gly-534 and Ser-560–Asn-570. Residues Ser-571–Ser-590 show a composition bias toward low complexity. Positions Asn-591 to Val-609 are enriched in polar residues. Residues Gln-610–Asp-627 are compositionally biased toward acidic residues. A Phosphoserine modification is found at Ser-649. The span at Gln-659–Thr-671 shows a compositional bias: polar residues. Residues Pro-1467 to Val-1477 are compositionally biased toward acidic residues. Residue Ser-1469 is modified to Phosphoserine. The USP domain occupies Val-1894–Met-2239. Residue Cys-1903 is the Nucleophile of the active site. His-2164 (proton acceptor) is an active-site residue. Ser-2488 carries the post-translational modification Phosphoserine. The interval Asn-3331–Arg-3443 is disordered. The segment covering Gln-3336 to Glu-3347 has biased composition (basic and acidic residues). Phosphoserine occurs at positions 3358 and 3359. Phosphothreonine is present on Thr-3381. Phosphoserine is present on residues Ser-3386 and Ser-3406. Residues Ser-3421–Ser-3432 are compositionally biased toward polar residues. Over residues Gln-3433–Arg-3443 the composition is skewed to basic and acidic residues. Position 3503 is a phosphoserine (Ser-3503).

This sequence belongs to the peptidase C19 family. As to quaternary structure, interacts with AXIN1 and AXIN2. In terms of tissue distribution, expressed in brain at low level.

It catalyses the reaction Thiol-dependent hydrolysis of ester, thioester, amide, peptide and isopeptide bonds formed by the C-terminal Gly of ubiquitin (a 76-residue protein attached to proteins as an intracellular targeting signal).. Its function is as follows. Ubiquitin hydrolase that can remove conjugated ubiquitin from AXIN1 and AXIN2, thereby acting as a regulator of Wnt signaling pathway. Acts as an activator of the Wnt signaling pathway downstream of the beta-catenin destruction complex by deubiquitinating and stabilizing AXIN1 and AXIN2, leading to promote nuclear accumulation of AXIN1 and AXIN2 and positively regulate beta-catenin (CTNBB1)-mediated transcription. Recognizes and hydrolyzes the peptide bond at the C-terminal Gly of ubiquitin. Involved in the processing of poly-ubiquitin precursors as well as that of ubiquitinated proteins. The protein is Ubiquitin carboxyl-terminal hydrolase 34 (USP34) of Homo sapiens (Human).